We begin with the raw amino-acid sequence, 43 residues long: Neurotrophic factor BDNF (43 aa).

It belongs to the NGF-beta family.

Its subcellular location is the secreted. Promotes the survival of neuronal populations that are all located either in the central nervous system or directly connected to it. This Macrovipera lebetinus (Levantine viper) protein is Neurotrophic factor BDNF (BDNF).